The sequence spans 254 residues: Alcohol dehydrogenase (254 aa).

An NAD(+)-binding site is contributed by 10–33 (FVAGLGGIGLDTSREIVKSGPKNL). Ser-138 serves as a coordination point for substrate. Tyr-151 functions as the Proton acceptor in the catalytic mechanism.

The protein belongs to the short-chain dehydrogenases/reductases (SDR) family. In terms of assembly, homodimer.

It catalyses the reaction a primary alcohol + NAD(+) = an aldehyde + NADH + H(+). It carries out the reaction a secondary alcohol + NAD(+) = a ketone + NADH + H(+). The protein is Alcohol dehydrogenase (Adh) of Drosophila affinidisjuncta (Fruit fly).